A 909-amino-acid chain; its full sequence is Ribosome-releasing factor 2, mitochondrial (909 aa).

Residues 1-15 (MVAAPLLRAHQAARL) constitute a mitochondrion transit peptide. In terms of domain architecture, tr-type G spans 57–367 (DRTRNIGIIA…AVTNLLPSPP (311 aa)). Residue 66-73 (AHIDAGKT) coordinates GTP. Residues 121–148 (WPPQTAGDGNTTPQEPQTPRSASSHTVN) form a disordered region. The segment covering 127-148 (GDGNTTPQEPQTPRSASSHTVN) has biased composition (polar residues). GTP-binding positions include 151–155 (DTPGH) and 205–208 (NKLD).

It belongs to the TRAFAC class translation factor GTPase superfamily. Classic translation factor GTPase family. EF-G/EF-2 subfamily.

The protein resides in the mitochondrion. Mitochondrial GTPase that mediates the disassembly of ribosomes from messenger RNA at the termination of mitochondrial protein biosynthesis. Not involved in the GTP-dependent ribosomal translocation step during translation elongation. This is Ribosome-releasing factor 2, mitochondrial (mef2) from Aspergillus flavus (strain ATCC 200026 / FGSC A1120 / IAM 13836 / NRRL 3357 / JCM 12722 / SRRC 167).